The following is a 130-amino-acid chain: Small ribosomal subunit protein uS9 (130 aa).

The span at 101–110 shows a compositional bias: basic and acidic residues; the sequence is AGFLTRDPRM. The tract at residues 101–130 is disordered; that stretch reads AGFLTRDPRMKERKKYGLKKARRAPQFSKR. The span at 111–130 shows a compositional bias: basic residues; that stretch reads KERKKYGLKKARRAPQFSKR.

Belongs to the universal ribosomal protein uS9 family.

The protein is Small ribosomal subunit protein uS9 of Clostridium tetani (strain Massachusetts / E88).